Here is a 411-residue protein sequence, read N- to C-terminus: Adenylosuccinate synthetase (411 aa).

GTP contacts are provided by residues 11–17 and 39–41; these read GDEGKGK and GHT. The active-site Proton acceptor is the aspartate 12. Mg(2+) contacts are provided by aspartate 12 and glycine 39. Residues 12–15, 37–40, threonine 121, arginine 135, glutamine 215, threonine 230, and arginine 294 contribute to the IMP site; these read DEGK and NAGH. Catalysis depends on histidine 40, which acts as the Proton donor. Residue 290 to 296 coordinates substrate; it reads TTTKRPR. GTP is bound by residues arginine 296, 322–324, and 400–402; these read KLD and STS.

The protein belongs to the adenylosuccinate synthetase family. As to quaternary structure, homodimer. The cofactor is Mg(2+).

It localises to the cytoplasm. The catalysed reaction is IMP + L-aspartate + GTP = N(6)-(1,2-dicarboxyethyl)-AMP + GDP + phosphate + 2 H(+). The protein operates within purine metabolism; AMP biosynthesis via de novo pathway; AMP from IMP: step 1/2. Functionally, plays an important role in the de novo pathway of purine nucleotide biosynthesis. Catalyzes the first committed step in the biosynthesis of AMP from IMP. In Helicobacter pylori (strain ATCC 700392 / 26695) (Campylobacter pylori), this protein is Adenylosuccinate synthetase.